We begin with the raw amino-acid sequence, 363 residues long: MKIGVFVPIGNNGWLISTHAPQYMPTFELNKAIVQKAEHYHFDFALSMIKLRGFGGKTEFWDHNLESFTLMAGLAAVTSRIQIYATAATLTLPPAIVARMAATIDSISGGRFGVNLVTGWQKPEYEQMGIWPGDDYFSRRYDYLTEYVQVLRDLWGSGKSDFKGDFFTMDDCRVSPQPSVPMKVICAGQSDAGMAFSARYADFNFCFGKGVNTPTAFAPTAARMKQAAEQTGRDVGSYVLFMVIADETDDAARAKWEHYKAGADEEALSWLTEQSQKDTRSGTDTNVRQMADPTSAVNINMGTLVGSYASVARMLDEVASVPGAEGVLLTFDDFLSGIENFGERIQPLMQCRAHLPALTQEVA.

Residues I49 to K50, N115, E124, R140 to Y141, and S190 each bind FMN.

It belongs to the NtaA/SnaA/DszA monooxygenase family. RutA subfamily.

It carries out the reaction uracil + FMNH2 + NADH + O2 = (Z)-3-ureidoacrylate + FMN + NAD(+) + H2O + H(+). The enzyme catalyses thymine + FMNH2 + NADH + O2 = (Z)-2-methylureidoacrylate + FMN + NAD(+) + H2O + H(+). In terms of biological role, catalyzes the pyrimidine ring opening between N-3 and C-4 by an unusual flavin hydroperoxide-catalyzed mechanism, adding oxygen atoms in the process to yield ureidoacrylate peracid, that immediately reacts with FMN forming ureidoacrylate and FMN-N(5)-oxide. The FMN-N(5)-oxide reacts spontaneously with NADH to produce FMN. Requires the flavin reductase RutF to regenerate FMN in vivo. The protein is Pyrimidine monooxygenase RutA of Escherichia coli O127:H6 (strain E2348/69 / EPEC).